The primary structure comprises 275 residues: Large ribosomal subunit protein uL2c (275 aa).

Positions 222 to 258 are disordered; that stretch reads GSAMNPVDHPHGGGEGRAPIGRARPVSPWGRPALGAK.

This sequence belongs to the universal ribosomal protein uL2 family. As to quaternary structure, part of the 50S ribosomal subunit.

The protein resides in the plastid. It is found in the chloroplast. The protein is Large ribosomal subunit protein uL2c (rpl2) of Chlorella vulgaris (Green alga).